The sequence spans 381 residues: Phospholipid scramblase family protein C343.06c (381 aa).

Residues glutamine 336 to glutamine 369 form a disordered region. Residues glutamate 344–proline 359 are compositionally biased toward polar residues.

It belongs to the phospholipid scramblase family.

It is found in the mitochondrion. This is Phospholipid scramblase family protein C343.06c from Schizosaccharomyces pombe (strain 972 / ATCC 24843) (Fission yeast).